The chain runs to 155 residues: Ribosomal RNA large subunit methyltransferase H (155 aa).

Residues leucine 72, glycine 103, and 122-127 each bind S-adenosyl-L-methionine; that span reads LSALTL.

This sequence belongs to the RNA methyltransferase RlmH family. Homodimer.

Its subcellular location is the cytoplasm. The catalysed reaction is pseudouridine(1915) in 23S rRNA + S-adenosyl-L-methionine = N(3)-methylpseudouridine(1915) in 23S rRNA + S-adenosyl-L-homocysteine + H(+). Functionally, specifically methylates the pseudouridine at position 1915 (m3Psi1915) in 23S rRNA. The protein is Ribosomal RNA large subunit methyltransferase H of Enterobacter sp. (strain 638).